We begin with the raw amino-acid sequence, 738 residues long: 1,4-alpha-glucan branching enzyme GlgB (738 aa).

The active-site Nucleophile is the D417. E472 serves as the catalytic Proton donor.

The protein belongs to the glycosyl hydrolase 13 family. GlgB subfamily. As to quaternary structure, monomer.

The catalysed reaction is Transfers a segment of a (1-&gt;4)-alpha-D-glucan chain to a primary hydroxy group in a similar glucan chain.. It functions in the pathway glycan biosynthesis; glycogen biosynthesis. Functionally, catalyzes the formation of the alpha-1,6-glucosidic linkages in glycogen by scission of a 1,4-alpha-linked oligosaccharide from growing alpha-1,4-glucan chains and the subsequent attachment of the oligosaccharide to the alpha-1,6 position. This Burkholderia pseudomallei (strain 1106a) protein is 1,4-alpha-glucan branching enzyme GlgB.